Reading from the N-terminus, the 204-residue chain is Tumor necrosis factor alpha-induced protein 8-like protein 3 (204 aa).

Positions Met-1 to Glu-10 are enriched in acidic residues. Residues Met-1–His-20 are disordered. A binding to phosphoinositides region spans residues Val-21–Leu-204.

The protein belongs to the TNFAIP8 family. Widely expressed (at protein level).

It is found in the cytoplasm. The protein resides in the cell membrane. Functionally, acts as a lipid transfer protein. Preferentially captures and shuttles two lipid second messengers, i.e., phosphatidylinositol 4,5- bisphosphate and phosphatidylinositol 3,4,5-trisphosphate and increases their levels in the plasma membrane. Additionally, may also function as a lipid-presenting protein to enhance the activity of the PI3K-AKT and MEK-ERK pathways. May act as a regulator of tumorigenesis through its activation of phospholipid signaling. The protein is Tumor necrosis factor alpha-induced protein 8-like protein 3 (Tnfaip8l3) of Mus musculus (Mouse).